Reading from the N-terminus, the 3590-residue chain is Filamentous hemagglutinin (3590 aa).

Disordered stretches follow at residues 3256–3309 (GGGS…VEVS) and 3417–3498 (APPP…GRHV). A compositionally biased stretch (pro residues) spans 3289-3299 (PSRPTTPPASP). Residues 3300 to 3309 (QPIRATVEVS) show a composition bias toward low complexity. Pro residues predominate over residues 3417 to 3432 (APPPVVETAQPLPPVK).

It is found in the cell surface. In terms of biological role, evidence for a role in host-cell binding and infection. This is Filamentous hemagglutinin (fhaB) from Bordetella pertussis (strain Tohama I / ATCC BAA-589 / NCTC 13251).